The following is a 209-amino-acid chain: Ribosomal RNA large subunit methyltransferase E (209 aa).

Positions 63, 65, 83, 99, and 124 each coordinate S-adenosyl-L-methionine. The Proton acceptor role is filled by Lys-164.

It belongs to the class I-like SAM-binding methyltransferase superfamily. RNA methyltransferase RlmE family.

The protein resides in the cytoplasm. The catalysed reaction is uridine(2552) in 23S rRNA + S-adenosyl-L-methionine = 2'-O-methyluridine(2552) in 23S rRNA + S-adenosyl-L-homocysteine + H(+). In terms of biological role, specifically methylates the uridine in position 2552 of 23S rRNA at the 2'-O position of the ribose in the fully assembled 50S ribosomal subunit. The protein is Ribosomal RNA large subunit methyltransferase E of Aliivibrio fischeri (strain ATCC 700601 / ES114) (Vibrio fischeri).